The chain runs to 403 residues: Protein-export membrane protein SecD (403 aa).

6 consecutive transmembrane segments (helical) span residues 13 to 33 (LLVITAVWIVAATSLAVKGVN), 245 to 265 (FLKMAMIAGAIAFAAVSVIIA), 285 to 305 (VVFLIGLASLTGFTIDLPALA), 306 to 326 (GIILSIGSGVDDLIVITDEIV), 347 to 367 (VVLASFATLAAAMAVLFVAGM), and 368 to 388 (GLLKGFAIMTIAGAFYGVVIT).

The protein belongs to the SecD/SecF family. SecD subfamily. Part of the protein translocation apparatus. Forms a complex with SecF.

The protein resides in the cell membrane. Involved in protein export. The chain is Protein-export membrane protein SecD from Methanopyrus kandleri (strain AV19 / DSM 6324 / JCM 9639 / NBRC 100938).